The primary structure comprises 298 residues: uncharacterized protein (298 aa).

In terms of domain architecture, ABC transporter spans 2–229; it reads LTIDHVTKTF…FGKKNVTIHS (228 aa). 34 to 41 contributes to the ATP binding site; that stretch reads GANGAGKT.

This sequence belongs to the ABC transporter superfamily.

It is found in the cell membrane. This is an uncharacterized protein from Bacillus subtilis (strain 168).